The primary structure comprises 403 residues: Casein kinase II subunit alpha-2 (403 aa).

The N-terminal stretch at 1-31 is a signal peptide; the sequence is MHLIFFFSYFLRRYLLLLCAILILRAPLAHS. Residues 104 to 389 enclose the Protein kinase domain; sequence YEVVRKVGRG…AKEAMAHPYF (286 aa). ATP is bound by residues 110–118 and lysine 133; that span reads VGRGKYSEV. The N-linked (GlcNAc...) asparagine glycan is linked to asparagine 182. The Proton acceptor role is filled by aspartate 221.

It belongs to the protein kinase superfamily. Ser/Thr protein kinase family. CK2 subfamily. In terms of assembly, heterotetramer of two catalytic alpha subunits and two regulatory beta subunits. As to expression, seems to be present in all plant organs. But seems to be more expressed than CKA1.

It localises to the nucleus. It is found in the nucleolus. The catalysed reaction is L-seryl-[protein] + ATP = O-phospho-L-seryl-[protein] + ADP + H(+). It carries out the reaction L-threonyl-[protein] + ATP = O-phospho-L-threonyl-[protein] + ADP + H(+). Casein kinases are operationally defined by their preferential utilization of acidic proteins such as caseins as substrates. The alpha chain contains the catalytic site. The tetrameric holoenzyme CK2, composed of two alpha and two beta subunits, phosphorylates the transcription factor PIF1 after an exposure to light, resulting in a proteasome-dependent degradation of PIF1 and promotion of photomorphogenesis. CK2 phosphorylates translation initiation factors. May participate in the regulation of the initiation of translation. Acts as circadian clock component that maintains the correct period length through phosphorylation of CCA1. May act as an ectokinase that phosphorylates several extracellular proteins. The protein is Casein kinase II subunit alpha-2 of Arabidopsis thaliana (Mouse-ear cress).